The primary structure comprises 204 residues: Bcl-2-like protein 10 (204 aa).

The BH1 signature appears at 86-105 (LSDSPGPTWGRVVTLVTFAG). Residues 118–133 (WKKWGFQPRLKEQEGD) form a required for Ca(2+) binding region. Glycyl lysine isopeptide (Lys-Gly) (interchain with G-Cter in ubiquitin) cross-links involve residues Lys-119, Lys-120, and Lys-128. The BH2 motif lies at 156 to 167 (WLQAQGGWDGFC). Residues 183–200 (LVQAFLSCLLTTAFIYLW) traverse the membrane as a helical segment.

Belongs to the Bcl-2 family. Interacts with BAX. Interacts with BCL2 and BCL2L1/BCLX. Interacts with APAF1. Interacts with ITPR1, ITPR2 and ITPR3; the interaction with ITPR1 is increased in the presence of AHCLY1. Interacts with AHCYL1. Interacts with HIP1R (via ENTH and I/LWEQ domains). Interacts with CASP9. Interacts with BCL2L11/BIM. Interacts with BIK. Interacts with UBQLN4. Interacts with NME2/NM23-H2. Interacts with PMAIP1/NOXA. Interacts with TPX2. Interacts with UBQLN1; in the cytoplasm. Interacts (via BH1 domain) with BECN1. Ca(2+) serves as cofactor. Post-translationally, monoubiquitinated by UBQLN1; results in stabilization of BCL2L10 protein abundance and in relocalization from mitochondria to cytoplasm. In terms of tissue distribution, widely expressed in adult tissues. Preferentially expressed in lung, liver and kidney.

The protein resides in the mitochondrion. Its subcellular location is the nucleus membrane. It localises to the endoplasmic reticulum. It is found in the cytoplasm. The protein localises to the cytoskeleton. The protein resides in the spindle. Functionally, promotes cell survival by suppressing apoptosis induced by BAX but not BAK. Increases binding of AHCYL1/IRBIT to ITPR1. Reduces ITPR1-mediated calcium release from the endoplasmic reticulum cooperatively with AHCYL1/IRBIT under normal cellular conditions. Under apoptotic stress conditions, dissociates from ITPR1 and is displaced from mitochondria-associated endoplasmic reticulum membranes, leading to increased Ca(2+) transfer to mitochondria which promotes apoptosis. Required for the correct formation of the microtubule organizing center during oocyte cell division, potentially via regulation of protein abundance and localization of other microtubule organizing center components such as AURKA and TPX2. This chain is Bcl-2-like protein 10, found in Homo sapiens (Human).